Here is a 204-residue protein sequence, read N- to C-terminus: Ciliary microtubule inner protein 7 (204 aa).

Its subcellular location is the cell projection. It is found in the cilium. The chain is Ciliary microtubule inner protein 7 from Homo sapiens (Human).